A 373-amino-acid polypeptide reads, in one-letter code: Secondary metabolism regulator laeA (373 aa).

Disordered stretches follow at residues 1-21 and 53-81; these read MFLN…PLNV and AAER…NPDR. Over residues 67 to 77 the composition is skewed to polar residues; it reads GSPSINSTSSK.

The protein belongs to the methyltransferase superfamily. LaeA methyltransferase family. Component of the heterotrimeric velvet complex composed of laeA, veA and velB; VeA acting as a bridging protein between laeA and velB.

The protein localises to the nucleus. The catalysed reaction is L-methionyl-[protein] + S-adenosyl-L-methionine = S-methyl-L-methionyl-[protein] + S-adenosyl-L-homocysteine. Functionally, methyltransferase that performs automethylation. No other methyl-accepting substrate has been identified yet. Component of the velvet transcription factor complex that acts as a global regulator for secondary metabolite gene expression. Controls the expression of the cyclopiazonic acid (CPA) gene clusters. Regulates also pigmentation and conidial head morphology. This chain is Secondary metabolism regulator laeA, found in Aspergillus fumisynnematus.